Here is a 71-residue protein sequence, read N- to C-terminus: Pro-MCH (71 aa).

A signal peptide spans 1–20; sequence AKMNLSSYILILTFSLFSQG.

The protein belongs to the melanin-concentrating hormone family.

The protein localises to the secreted. In Pan paniscus (Pygmy chimpanzee), this protein is Pro-MCH (PMCH).